Reading from the N-terminus, the 181-residue chain is UPF0398 protein lin2003 (181 aa).

Belongs to the UPF0398 family.

This Listeria innocua serovar 6a (strain ATCC BAA-680 / CLIP 11262) protein is UPF0398 protein lin2003.